Here is a 343-residue protein sequence, read N- to C-terminus: MQRITLTRPDDWHLHLRDGEQLATVLPHTATVFGRAIIMPNLKPPVTTVDQAAAYRERILAALPAGAHFEPLMTLYLTDNTPPAEIEKAAASGFVHAVKLYPAGATTNSDAGVTDLARCEETLAAMAERGLPLCVHGEVTRDEVDIFDREAHFIDEVLDPLVQRHSRLRVVFEHITTQAAVDYLRQAPDRVGATLTVQHLMANRNHMLVGGVRPHYYCLPILKRERDRQALVEAATSGHPRFFLGTDSAPHPKGAKESACGCAGVYSAHAALPFYAEIFEAAGALDRLEGFASHHGADFYGLPRNRDSVTLERAATPIPEAFPMGDDTLVPFRAGGEVAWRVV.

The Zn(2+) site is built by His-13 and His-15. Residues 15 to 17 and Asn-41 contribute to the substrate site; that span reads HLR. The Zn(2+) site is built by Lys-99, His-136, and His-174. Lys-99 is modified (N6-carboxylysine). A substrate-binding site is contributed by His-136. Leu-219 contributes to the substrate binding site. Position 247 (Asp-247) interacts with Zn(2+). The active site involves Asp-247. Positions 251 and 263 each coordinate substrate.

Belongs to the metallo-dependent hydrolases superfamily. DHOase family. Class II DHOase subfamily. In terms of assembly, homodimer. It depends on Zn(2+) as a cofactor.

The enzyme catalyses (S)-dihydroorotate + H2O = N-carbamoyl-L-aspartate + H(+). It participates in pyrimidine metabolism; UMP biosynthesis via de novo pathway; (S)-dihydroorotate from bicarbonate: step 3/3. Its function is as follows. Catalyzes the reversible cyclization of carbamoyl aspartate to dihydroorotate. This is Dihydroorotase from Alkalilimnicola ehrlichii (strain ATCC BAA-1101 / DSM 17681 / MLHE-1).